The chain runs to 81 residues: Dermaseptin-B7 (81 aa).

Positions 1–22 are cleaved as a signal peptide; that stretch reads MASLKKSLFLVLFLGLVSLSIC. A propeptide spanning residues 23–44 is cleaved from the precursor; the sequence is EEEKRENEDEEEQEDDEQSEMK. Residues 24-48 are disordered; that stretch reads EEKRENEDEEEQEDDEQSEMKRGLW. A compositionally biased stretch (acidic residues) spans 30-40; that stretch reads EDEEEQEDDEQ. V78 carries the post-translational modification Valine amide. The propeptide occupies 80–81; it reads EQ.

Belongs to the frog skin active peptide (FSAP) family. Dermaseptin subfamily. In terms of tissue distribution, expressed by the skin glands.

The protein localises to the secreted. Functionally, has antimicrobial activity. In Phyllomedusa bicolor (Two-colored leaf frog), this protein is Dermaseptin-B7 (DRG1).